The chain runs to 34 residues: Photosystem II reaction center protein M (34 aa).

Residues 5 to 25 (ILAFIATALFILIPTAFLLII) traverse the membrane as a helical segment.

This sequence belongs to the PsbM family. PSII is composed of 1 copy each of membrane proteins PsbA, PsbB, PsbC, PsbD, PsbE, PsbF, PsbH, PsbI, PsbJ, PsbK, PsbL, PsbM, PsbT, PsbX, PsbY, PsbZ, Psb30/Ycf12, at least 3 peripheral proteins of the oxygen-evolving complex and a large number of cofactors. It forms dimeric complexes.

Its subcellular location is the plastid. The protein localises to the chloroplast thylakoid membrane. One of the components of the core complex of photosystem II (PSII). PSII is a light-driven water:plastoquinone oxidoreductase that uses light energy to abstract electrons from H(2)O, generating O(2) and a proton gradient subsequently used for ATP formation. It consists of a core antenna complex that captures photons, and an electron transfer chain that converts photonic excitation into a charge separation. This subunit is found at the monomer-monomer interface. This is Photosystem II reaction center protein M from Lolium perenne (Perennial ryegrass).